A 280-amino-acid chain; its full sequence is Band 7 protein AGAP004871 (280 aa).

A helical membrane pass occupies residues 23 to 43 (ILIFLSWVLVVLTMPFSLLVC).

The protein belongs to the band 7/mec-2 family.

It is found in the membrane. The chain is Band 7 protein AGAP004871 from Anopheles gambiae (African malaria mosquito).